Consider the following 142-residue polypeptide: Small heat shock protein IbpB (142 aa).

Residues 26 to 137 (AGESQSFPPY…APQRIAISER (112 aa)) enclose the sHSP domain.

Belongs to the small heat shock protein (HSP20) family. In terms of assembly, homodimer. Forms homomultimers of about 100-150 subunits at optimal growth temperatures. Conformation changes to oligomers at high temperatures or high ionic concentrations. The decrease in size of the multimers is accompanied by an increase in chaperone activity.

Its subcellular location is the cytoplasm. Functionally, associates with aggregated proteins, together with IbpA, to stabilize and protect them from irreversible denaturation and extensive proteolysis during heat shock and oxidative stress. Aggregated proteins bound to the IbpAB complex are more efficiently refolded and reactivated by the ATP-dependent chaperone systems ClpB and DnaK/DnaJ/GrpE. Its activity is ATP-independent. The sequence is that of Small heat shock protein IbpB from Klebsiella pneumoniae subsp. pneumoniae (strain ATCC 700721 / MGH 78578).